Reading from the N-terminus, the 397-residue chain is Elongation factor Tu (397 aa).

A tr-type G domain is found at 10–207; it reads KPHVNVGTIG…TLDAYIPEPE (198 aa). The tract at residues 19-26 is G1; it reads GHVDHGKT. 19–26 is a binding site for GTP; sequence GHVDHGKT. Position 26 (threonine 26) interacts with Mg(2+). Residues 60–64 are G2; that stretch reads GITIA. Residues 81–84 form a G3 region; sequence DCPG. Residues 81 to 85 and 136 to 139 contribute to the GTP site; these read DCPGH and NKAD. The interval 136-139 is G4; it reads NKAD. A G5 region spans residues 174–176; that stretch reads SAL.

Belongs to the TRAFAC class translation factor GTPase superfamily. Classic translation factor GTPase family. EF-Tu/EF-1A subfamily. As to quaternary structure, monomer.

It is found in the cytoplasm. The catalysed reaction is GTP + H2O = GDP + phosphate + H(+). Functionally, GTP hydrolase that promotes the GTP-dependent binding of aminoacyl-tRNA to the A-site of ribosomes during protein biosynthesis. This Hahella chejuensis (strain KCTC 2396) protein is Elongation factor Tu.